A 112-amino-acid polypeptide reads, in one-letter code: Protein Tat (112 aa).

The interval 1-24 (MDPVDPEMPPWHHPGSKPQTPCNN) is interaction with human CREBBP. The tract at residues 1–48 (MDPVDPEMPPWHHPGSKPQTPCNNCYCKRCCYHCYVCFTKKGLGISHG) is transactivation. Positions 22, 25, and 27 each coordinate Zn(2+). The cysteine-rich stretch occupies residues 22–37 (CNNCYCKRCCYHCYVC). At Lys-28 the chain carries N6-acetyllysine; by host PCAF. The Zn(2+) site is built by Cys-30, His-33, Cys-34, and Cys-37. The tract at residues 38–48 (FTKKGLGISHG) is core. A disordered region spans residues 45–112 (ISHGRKKRRR…CNSCTRISGQ (68 aa)). A Nuclear localization signal, RNA-binding (TAR), and protein transduction motif is present at residues 49 to 56 (RKKRRRPA). An interaction with the host capping enzyme RNGTT region spans residues 49-82 (RKKRRRPAAAASYPDNKDPVPEQHTGRKQKRQEE). N6-acetyllysine; by host EP300 and GCN5L2 occurs at positions 50 and 51. An asymmetric dimethylarginine; by host PRMT6 mark is found at Arg-52 and Arg-53. A compositionally biased stretch (basic and acidic residues) spans 63–91 (DNKDPVPEQHTGRKQKRQEEQEKKVEKET). Residues 93–112 (PSGQPCHQDSCNSCTRISGQ) show a composition bias toward polar residues.

Belongs to the lentiviruses Tat family. Interacts with host CCNT1. Associates with the P-TEFb complex composed at least of Tat, P-TEFb (CDK9 and CCNT1), TAR RNA, RNA Pol II. Recruits the HATs CREBBP, TAF1/TFIID, EP300, PCAF and GCN5L2. Interacts with host KAT5/Tip60; this interaction targets the latter to degradation. Interacts with the host deacetylase SIRT1. Interacts with host capping enzyme RNGTT; this interaction stimulates RNGTT. Binds to host KDR, and to the host integrins ITGAV/ITGB3 and ITGA5/ITGB1. Interacts with host KPNB1/importin beta-1 without previous binding to KPNA1/importin alpha-1. Interacts with EIF2AK2. Interacts with host nucleosome assembly protein NAP1L1; this interaction may be required for the transport of Tat within the nucleus, since the two proteins interact at the nuclear rim. Interacts with host C1QBP/SF2P32; this interaction involves lysine-acetylated Tat. Interacts with the host chemokine receptors CCR2, CCR3 and CXCR4. Interacts with host DPP4/CD26; this interaction may trigger an anti-proliferative effect. Interacts with host LDLR. Interacts with the host extracellular matrix metalloproteinase MMP1. Interacts with host PRMT6; this interaction mediates Tat's methylation. Interacts with, and is ubiquitinated by MDM2/Hdm2. Interacts with host PSMC3 and HTATIP2. Interacts with STAB1; this interaction may overcome SATB1-mediated repression of IL2 and IL2RA (interleukin) in T cells by binding to the same domain than HDAC1. Interacts (when acetylated) with human CDK13, thereby increasing HIV-1 mRNA splicing and promoting the production of the doubly spliced HIV-1 protein Nef. Interacts with host TBP; this interaction modulates the activity of transcriptional pre-initiation complex. Interacts with host RELA. Interacts with host PLSCR1; this interaction negatively regulates Tat transactivation activity by altering its subcellular distribution. In terms of processing, asymmetrical arginine methylation by host PRMT6 seems to diminish the transactivation capacity of Tat and affects the interaction with host CCNT1. Acetylation by EP300, CREBBP, GCN5L2/GCN5 and PCAF regulates the transactivation activity of Tat. EP300-mediated acetylation of Lys-50 promotes dissociation of Tat from the TAR RNA through the competitive binding to PCAF's bromodomain. In addition, the non-acetylated Tat's N-terminus can also interact with PCAF. PCAF-mediated acetylation of Lys-28 enhances Tat's binding to CCNT1. Lys-50 is deacetylated by SIRT1. Post-translationally, polyubiquitination by host MDM2 does not target Tat to degradation, but activates its transactivation function and fosters interaction with CCNT1 and TAR RNA. In terms of processing, phosphorylated by EIF2AK2 on serine and threonine residues adjacent to the basic region important for TAR RNA binding and function. Phosphorylation of Tat by EIF2AK2 is dependent on the prior activation of EIF2AK2 by dsRNA.

Its subcellular location is the host nucleus. It localises to the host nucleolus. The protein resides in the host cytoplasm. It is found in the secreted. In terms of biological role, transcriptional activator that increases RNA Pol II processivity, thereby increasing the level of full-length viral transcripts. Recognizes a hairpin structure at the 5'-LTR of the nascent viral mRNAs referred to as the transactivation responsive RNA element (TAR) and recruits the cyclin T1-CDK9 complex (P-TEFb complex) that will in turn hyperphosphorylate the RNA polymerase II to allow efficient elongation. The CDK9 component of P-TEFb and other Tat-activated kinases hyperphosphorylate the C-terminus of RNA Pol II that becomes stabilized and much more processive. Other factors such as HTATSF1/Tat-SF1, SUPT5H/SPT5, and HTATIP2 are also important for Tat's function. Besides its effect on RNA Pol II processivity, Tat induces chromatin remodeling of proviral genes by recruiting the histone acetyltransferases (HATs) CREBBP, EP300 and PCAF to the chromatin. This also contributes to the increase in proviral transcription rate, especially when the provirus integrates in transcriptionally silent region of the host genome. To ensure maximal activation of the LTR, Tat mediates nuclear translocation of NF-kappa-B by interacting with host RELA. Through its interaction with host TBP, Tat may also modulate transcription initiation. Tat can reactivate a latently infected cell by penetrating in it and transactivating its LTR promoter. In the cytoplasm, Tat is thought to act as a translational activator of HIV-1 mRNAs. Functionally, extracellular circulating Tat can be endocytosed by surrounding uninfected cells via the binding to several surface receptors such as CD26, CXCR4, heparan sulfate proteoglycans (HSPG) or LDLR. Neurons are rarely infected, but they internalize Tat via their LDLR. Through its interaction with nuclear HATs, Tat is potentially able to control the acetylation-dependent cellular gene expression. Modulates the expression of many cellular genes involved in cell survival, proliferation or in coding for cytokines or cytokine receptors. Tat plays a role in T-cell and neurons apoptosis. Tat induced neurotoxicity and apoptosis probably contribute to neuroAIDS. Circulating Tat also acts as a chemokine-like and/or growth factor-like molecule that binds to specific receptors on the surface of the cells, affecting many cellular pathways. In the vascular system, Tat binds to ITGAV/ITGB3 and ITGA5/ITGB1 integrins dimers at the surface of endothelial cells and competes with bFGF for heparin-binding sites, leading to an excess of soluble bFGF. The sequence is that of Protein Tat from Homo sapiens (Human).